The primary structure comprises 1202 residues: MGREQDLILAVKNGDVTGVQKLVAKVKATKTKLLGSTKRLNVNYQDADGFSALHHAALGGSLELIALLLEAQATVDIKDSNGMRPLHYAAWQGRLEPVRLLLRASAAVNAASLDGQIPLHLAAQYGHYEVSEMLLQHQSNPCLVNKAKKTPLDLACEFGRLKVAQLLLNSHLCVALLEGEAKDPCDPNYTTPLHLAAKNGHREVIRQLLRAGIEINRQTKTGTALHEAALYGKTEVVRLLLEGGVDVNIRNTYNQTALDIVNQFTTSQASREIKQLLREASGILKVRALKDFWNLHDPTALNVRAGDVITVLEQHPDGRWKGHIHESQRGTDRIGYFPPGIVEVVSKRVGIPAARLPSAPTPLRPGFSRTPQPPAEEPPHPLTYSQLPRVGLSPDSPAGDRNSVGSEGSVGSIRSAGSGQSSEGTNGHGPGLLIENAQPLPSAGEDQVLPGLHPPSLADNLSHRPLANCRSGEQIFTQDVRPEQLLEGKDAQAIHNWLSEFQLEGYTAHFLQAGYDVPTISRMTPEDLTAIGVTKPGHRKKIASEIAQLSIAEWLPSYIPTDLLEWLCALGLPQYHKQLVSSGYDSMGLVADLTWEELQEIGVNKLGHQKKLMLGVKRLAELRRGLLQGEALSEGGRRLAKGPELMAIEGLENGEGPATAGPRLLTFQGSELSPELQAAMAGGGPEPLPLPPARSPSQESIGARSRGSGHSQEQPAPQPSGGDPSPPQERNLPEGTERPPKLCSSLPGQGPPPYVFMYPQGSPSSPAPGPPPGAPWAFSYLAGPPATPPDPPRPKRRSHSLSRPGPTEGDAEGEAEGPVGSTLGSYATLTRRPGRSALVRTSPSVTPTPARGTPRSQSFALRARRKGPPPPPPKRLSSVSGPSPEPPPLDESPGPKEGATGPRRRTLSEPAGPSEPPGPPAPAGPASDTEEEEPGPEGTPPSRGSSGEGLPFAEEGNLTIKQRPKPAGPPPRETPVPPGLDFNLTESDTVKRRPKCREREPLQTALLAFGVASATPGPAAPLPSPTPGESPPASSLPQPEPSSLPAQGVPTPLAPSPAMQPPVPPCPGPGLESSAASRWNGETEPPAAPAALLKVPGAGTAPKPVSVACTQLAFSGPKLAPRLGPRPVPPPRPESTGTVGPGQAQQRLEQTSSSLAAALRAAEKSIGTKEQEGTPSASTKHILDDISTMFDALADQLDAMLD.

6 ANK repeats span residues 48-77, 81-110, 114-143, 147-176, 188-217, and 220-249; these read DGFS…TVDI, NGMR…AVNA, DGQI…NPCL, AKKT…CVAL, NYTT…EINR, and KTGT…DVNI. Y253 carries the post-translational modification Phosphotyrosine. The 67-residue stretch at 281–347 folds into the SH3 domain; the sequence is SGILKVRALK…PPGIVEVVSK (67 aa). Positions 355–460 are disordered; the sequence is RLPSAPTPLR…GLHPPSLADN (106 aa). 6 positions are modified to phosphoserine: S358, S393, S396, S403, S406, and S409. Positions 415-425 are enriched in polar residues; the sequence is SAGSGQSSEGT. S471 carries the post-translational modification Phosphoserine. SAM domains lie at 489 to 552 and 558 to 622; these read KDAQ…LSIA and YIPT…LAEL. 2 disordered regions span residues 676–1104 and 1116–1181; these read LQAA…APKP and GPKL…STKH. S725 carries the post-translational modification Phosphoserine. Positions 731–740 are enriched in basic and acidic residues; the sequence is NLPEGTERPP. Residues 765–774 show a composition bias toward pro residues; that stretch reads SPAPGPPPGA. Residues S858, S877, S878, and S892 each carry the phosphoserine modification. Positions 913–923 are enriched in pro residues; that stretch reads PSEPPGPPAPA. The span at 940 to 949 shows a compositional bias: low complexity; sequence PPSRGSSGEG. Pro residues-rich tracts occupy residues 966-978 and 1018-1030; these read PAGP…PVPP and PAAP…PGES. Over residues 1031-1051 the composition is skewed to low complexity; that stretch reads PPASSLPQPEPSSLPAQGVPT. Composition is skewed to pro residues over residues 1052–1068 and 1124–1133; these read PLAP…PCPG and GPRPVPPPRP. Residues 1135–1151 are compositionally biased toward polar residues; sequence STGTVGPGQAQQRLEQT. The span at 1161-1172 shows a compositional bias: basic and acidic residues; sequence AAEKSIGTKEQE.

May not bind CASK.

It is found in the cytoplasm. This chain is Caskin-2 (CASKIN2), found in Homo sapiens (Human).